A 1035-amino-acid chain; its full sequence is Protein hir-1 (1035 aa).

WD repeat units lie at residues Q15–D54, H68–T107, G129–T168, V171–T210, P232–N275, D299–I338, and I342–K383. A disordered region spans residues K393 to A479. Residues D408–E425 are compositionally biased toward basic and acidic residues.

The protein belongs to the WD repeat HIR1 family.

The protein resides in the nucleus. Functionally, required for replication-independent chromatin assembly and for the periodic repression of histone gene transcription during the cell cycle. The chain is Protein hir-1 (hir-1) from Neurospora crassa (strain ATCC 24698 / 74-OR23-1A / CBS 708.71 / DSM 1257 / FGSC 987).